Consider the following 757-residue polypeptide: Polyribonucleotide nucleotidyltransferase (757 aa).

Mg(2+)-binding residues include D482 and D488. The 60-residue stretch at 549-608 (PRMLSFYIDKDKISAAIGSKGKNIRSVCERSNAKIEIGDDGKVSVFATSGTEAEIAKSMM) folds into the KH domain. The S1 motif domain maps to 618-686 (GSIVDVKVVR…KGGCPKLSRR (69 aa)). Residues 703-714 (EERKDGPNDRDN) show a composition bias toward basic and acidic residues. Positions 703 to 757 (EERKDGPNDRDNYYNNSFSRKPGGSHHKRPPRPRSGFSNRNRPKFGNNDSSSGFY) are disordered. Basic residues predominate over residues 725-734 (GGSHHKRPPR).

It belongs to the polyribonucleotide nucleotidyltransferase family. It depends on Mg(2+) as a cofactor.

It is found in the cytoplasm. It carries out the reaction RNA(n+1) + phosphate = RNA(n) + a ribonucleoside 5'-diphosphate. Its function is as follows. Involved in mRNA degradation. Catalyzes the phosphorolysis of single-stranded polyribonucleotides processively in the 3'- to 5'-direction. The chain is Polyribonucleotide nucleotidyltransferase from Wolbachia sp. subsp. Drosophila simulans (strain wRi).